Consider the following 92-residue polypeptide: Putative septation protein SpoVG (92 aa).

Belongs to the SpoVG family.

Its function is as follows. Could be involved in septation. The chain is Putative septation protein SpoVG from Clostridioides difficile (strain 630) (Peptoclostridium difficile).